The following is a 307-amino-acid chain: tRNA dimethylallyltransferase (307 aa).

7–14 (GPTAGGKT) contacts ATP. 9 to 14 (TAGGKT) contacts substrate. Positions 32-35 (DSRQ) are interaction with substrate tRNA.

This sequence belongs to the IPP transferase family. In terms of assembly, monomer. Mg(2+) is required as a cofactor.

The enzyme catalyses adenosine(37) in tRNA + dimethylallyl diphosphate = N(6)-dimethylallyladenosine(37) in tRNA + diphosphate. Functionally, catalyzes the transfer of a dimethylallyl group onto the adenine at position 37 in tRNAs that read codons beginning with uridine, leading to the formation of N6-(dimethylallyl)adenosine (i(6)A). This Elusimicrobium minutum (strain Pei191) protein is tRNA dimethylallyltransferase.